The sequence spans 681 residues: Nucleolar GTP-binding protein 1 (681 aa).

Residues R170–L341 form the OBG-type G domain. GTP-binding positions include G176–S183, D222–I226, and N290–D293.

This sequence belongs to the TRAFAC class OBG-HflX-like GTPase superfamily. OBG GTPase family. NOG subfamily. Ubiquitously expressed.

The protein resides in the nucleus. It localises to the nucleolus. Involved in the biogenesis of the 60S ribosomal subunit. Has a role in regulating longevity, growth and brood size. May regulate fat storage via the insulin/IGF pathway. The protein is Nucleolar GTP-binding protein 1 of Caenorhabditis elegans.